The primary structure comprises 627 residues: Neuronal acetylcholine receptor subunit alpha-4 (627 aa).

A signal peptide spans 1–26; it reads MELGGPGAPRLLPPLLLLLGTGLLRA. The Extracellular portion of the chain corresponds to 27 to 249; it reads SSHVETRAHA…RRLPLFYTIN (223 aa). The N-linked (GlcNAc...) asparagine glycan is linked to Asn-57. The Ca(2+) site is built by Val-76 and Glu-78. Asn-107 and Asn-174 each carry an N-linked (GlcNAc...) asparagine glycan. 2 disulfides stabilise this stretch: Cys-161-Cys-175 and Cys-225-Cys-226. A helical membrane pass occupies residues 250–269; the sequence is LIIPCLLISCLTVLVFYLPS. Cys-271 is lipidated: S-palmitoyl cysteine. A run of 2 helical transmembrane segments spans residues 275–291 and 306–330; these read ITLC…FLLL and IGEY…VLNV. The Cytoplasmic segment spans residues 331–600; it reads HHRSPRTHTM…WKYVAMVIDR (270 aa). 2 disordered regions span residues 382–481 and 496–561; these read PRFW…VEGG and DDAA…LPLS. At Ser-424 the chain carries Phosphoserine. Low complexity predominate over residues 501 to 511; sequence EADGQAAGALA. A phosphoserine mark is found at Ser-538 and Ser-541. The segment covering 538–548 has biased composition (polar residues); it reads SSVSPSATVKT. A helical membrane pass occupies residues 601-619; sequence IFLWMFIIVCLLGTVGLFL.

The protein belongs to the ligand-gated ion channel (TC 1.A.9) family. Acetylcholine receptor (TC 1.A.9.1) subfamily. Alpha-4/CHRNA4 sub-subfamily. Neuronal AChR is composed of two different types of subunits: alpha and beta. CHRNA4 forms heteropentameric neuronal acetylcholine receptors with CHRNB2 and CHRNB4, as well as CHRNA5 and CHRNB3 as accesory subunits. Found in two major stoichiometric forms, LS (low agonist sensitivity): (CHRNA4)3:(CHRNB2)2 and HS (high agonist sensitivity): (CHRNA4)2:(CHRNB2)3, the two stoichiometric forms differ in their unitary conductance, calcium permeability, ACh sensitivity and potentiation by divalent cation. Cells produce predominantly an (CHRNA4)3:(CHRNB2)2 nAChR. The (CHRNA4)2:(CHRNB2)3 expression is selectively up-regulated by nicotine and has lower single channel conductance and calcium permeability. In the striatum, also forms CHRNA4:CHRNA6:CHRNB2 complexes. Also found in the stoichiometric form: (CHRNA4:CHRNB2)2:CHRNB3. Interacts with RIC3; which is required for proper folding and assembly. Interacts with LYPD6.

Its subcellular location is the synaptic cell membrane. It localises to the cell membrane. It catalyses the reaction Ca(2+)(in) = Ca(2+)(out). It carries out the reaction K(+)(in) = K(+)(out). The catalysed reaction is Na(+)(in) = Na(+)(out). With respect to regulation, activated by a myriad of ligands such as acetylcholine, cytisine, nicotine, choline and epibatidine. Channel potentiation by calcium is stoichiometry-selective, CHRNA4:CHRNB2 nACh receptor is achieved by calcium association with topographically distinct sites framed by anionic residues within the CHRNA4 subunit and between the CHRNA4 and CHRNB2 subunits. nAChR activity is inhibited by the antagonist alpha-conotoxins BuIA, PnIA, GID and MII, small disulfide-constrained peptides from cone snails. In terms of biological role, component of neuronal acetylcholine receptors (nAChRs) that function as pentameric, ligand-gated cation channels with high calcium permeability among other activities. nAChRs are excitatory neurotrasnmitter receptors formed by a collection of nAChR subunits known to mediate synaptic transmission in the nervous system and the neuromuscular junction. Each nAchR subunit confers differential attributes to channel properties, including activation, deactivation and desensitization kinetics, pH sensitivity, cation permeability, and binding to allosteric modulators. CHRNA4 forms heteropentameric neuronal acetylcholine receptors with CHRNB2 and CHRNB4, as well as CHRNA5 and CHRNB3 as accesory subunits. Is the most abundant nAChR subtype expressed in the central nervous system. Found in two major stoichiometric forms,(CHRNA4)3:(CHRNB2)2 and (CHRNA4)2:(CHRNB2)3, the two stoichiometric forms differ in their unitary conductance, calcium permeability, ACh sensitivity and potentiation by divalent cation. Involved in the modulation of calcium-dependent signaling pathways, influences the release of neurotransmitters, including dopamine, glutamate and GABA. In Homo sapiens (Human), this protein is Neuronal acetylcholine receptor subunit alpha-4.